Consider the following 341-residue polypeptide: Cell division protein FtsX (341 aa).

The tract at residues 1 to 34 is disordered; sequence MSTTRTPKVSERVAPKPADPQPAKKKRGEDDDGP. Topologically, residues 1 to 65 are cytoplasmic; it reads MSTTRTPKVS…RRLGKQPIGS (65 aa). The helical transmembrane segment at 66 to 86 threads the bilayer; sequence FFTCLVMAVALSMPMGLSLLL. The Periplasmic segment spans residues 87–212; it reads KNIEQLGGSW…LAAILKLGDR (126 aa). Residues 213–233 traverse the membrane as a helical segment; it reads FVFGLAVMLISALLLVIGNTI. The Cytoplasmic portion of the chain corresponds to 234-263; sequence RLHIENRRIEIEVIKLVGGTDAYVRRPFLY. A helical membrane pass occupies residues 264–284; it reads MGALYGLGAGLLAWGILAFGL. At 285-311 the chain is on the periplasmic side; it reads NWLNEAVVGLSGLYGSDFALGGVPASD. The chain crosses the membrane as a helical span at residues 312–332; sequence GLSLLIGAVLLGYIGAWIAVA. Topologically, residues 333–341 are cytoplasmic; that stretch reads RHLNELAPR.

Belongs to the ABC-4 integral membrane protein family. FtsX subfamily. Forms a membrane-associated complex with FtsE.

Its subcellular location is the cell inner membrane. Its function is as follows. Part of the ABC transporter FtsEX involved in cellular division. The chain is Cell division protein FtsX from Pseudomonas putida (Arthrobacter siderocapsulatus).